We begin with the raw amino-acid sequence, 327 residues long: Lactosylceramide 4-alpha-galactosyltransferase (327 aa).

Residues 166–168 (DTD) carry the DXD motif motif.

It belongs to the glycosyltransferase 32 family.

The protein resides in the golgi apparatus membrane. It catalyses the reaction a beta-D-Gal-(1-&gt;4)-beta-D-Glc-(1&lt;-&gt;1)-Cer(d18:1(4E)) + UDP-alpha-D-galactose = a globoside Gb3Cer (d18:1(4E)) + UDP + H(+). It carries out the reaction a beta-D-Gal-(1&lt;-&gt;1')-ceramide + UDP-alpha-D-galactose = alpha-D-Gal-(1-&gt;4)-beta-D-Gal-(1&lt;-&gt;1')-Cer + UDP + H(+). Its pathway is glycolipid biosynthesis. In terms of biological role, catalyzes the transfer of galactose from UDP-alpha-D-galactose to lactosylceramide/beta-D-galactosyl-(1-&gt;4)-beta-D-glucosyl-(1&lt;-&gt;1)-ceramide(d18:1(4E)) to produce globotriaosylceramide/globoside Gb3Cer (d18:1(4E)). Also able to transfer galactose to galactosylceramide/beta-D-Gal-(1&lt;-&gt;1')-Cer. Globoside Gb3Cer is a glycosphingolipid of the globo serie, one of the major types of neutral root structures of glycosphingolipids, that constitute a significant portion of mammalian cell membranes. This Gorilla gorilla gorilla (Western lowland gorilla) protein is Lactosylceramide 4-alpha-galactosyltransferase (A4GALT).